A 434-amino-acid chain; its full sequence is Alpha-enolase (434 aa).

A Mg(2+)-binding site is contributed by S40. Residues H158 and E167 each coordinate substrate. The active-site Proton donor is the E210. Residues D245, E293, and D318 each coordinate Mg(2+). 2 residues coordinate substrate: E293 and D318. The active-site Proton acceptor is K343. Substrate is bound by residues 370-373 (SHRS) and K394.

This sequence belongs to the enolase family. Homodimer. Mg(2+) serves as cofactor.

Its subcellular location is the cytoplasm. It catalyses the reaction (2R)-2-phosphoglycerate = phosphoenolpyruvate + H2O. It participates in carbohydrate degradation; glycolysis; pyruvate from D-glyceraldehyde 3-phosphate: step 4/5. In Python regius (Ball python), this protein is Alpha-enolase.